The sequence spans 475 residues: Glycogen synthase (475 aa).

Lys-15 lines the ADP-alpha-D-glucose pocket.

Belongs to the glycosyltransferase 1 family. Bacterial/plant glycogen synthase subfamily.

It catalyses the reaction [(1-&gt;4)-alpha-D-glucosyl](n) + ADP-alpha-D-glucose = [(1-&gt;4)-alpha-D-glucosyl](n+1) + ADP + H(+). It functions in the pathway glycan biosynthesis; glycogen biosynthesis. Synthesizes alpha-1,4-glucan chains using ADP-glucose. The polypeptide is Glycogen synthase (Anaeromyxobacter sp. (strain Fw109-5)).